We begin with the raw amino-acid sequence, 196 residues long: Adenylyl-sulfate kinase (196 aa).

31 to 38 contributes to the ATP binding site; sequence GLSGAGKS. The Phosphoserine intermediate role is filled by Ser105.

Belongs to the APS kinase family.

The catalysed reaction is adenosine 5'-phosphosulfate + ATP = 3'-phosphoadenylyl sulfate + ADP + H(+). It functions in the pathway sulfur metabolism; hydrogen sulfide biosynthesis; sulfite from sulfate: step 2/3. Catalyzes the synthesis of activated sulfate. The polypeptide is Adenylyl-sulfate kinase (Aeromonas salmonicida (strain A449)).